A 155-amino-acid chain; its full sequence is Arginine repressor (155 aa).

It belongs to the ArgR family.

The protein resides in the cytoplasm. The protein operates within amino-acid biosynthesis; L-arginine biosynthesis [regulation]. Its function is as follows. Regulates arginine biosynthesis genes. The protein is Arginine repressor of Mannheimia succiniciproducens (strain KCTC 0769BP / MBEL55E).